A 551-amino-acid polypeptide reads, in one-letter code: Colicin-E6 (551 aa).

Disordered stretches follow at residues 1-74, 244-269, 293-317, 406-501, and 517-551; these read MSGG…SGGG, LSPGVTNNTDKDVRPAGFTQGGNTRD, PDQVKQRQDEENRRQQEWDATHPVE, NKQA…WYGD, and EGYRASDGQHLGSFEPKTGNQLKGPDPKRNIKKYL. The segment covering 20–35 has biased composition (gly residues); it reads INGGPTGLGVGGGASD. A compositionally biased stretch (low complexity) spans 36–45; that stretch reads GSGWSSENNP. Residues 46 to 74 show a composition bias toward gly residues; it reads WGGGSGSGIHWGGGSGHGNGGGNGNSGGG. Composition is skewed to basic and acidic residues over residues 296–317 and 430–484; these read VKQRQDEENRRQQEWDATHPVE and ESRK…EGKP. A ribosome inactivating activity region spans residues 455 to 551; the sequence is KGVKDYGHDY…DPKRNIKKYL (97 aa). The tract at residues 530 to 551 is binding of immunity protein; the sequence is FEPKTGNQLKGPDPKRNIKKYL.

Belongs to the cloacin colicin family.

Its function is as follows. Inactivates ribosomes by hydrolyzing 16S RNA in 30S ribosomes at a specific site. Colicins are polypeptide toxins produced by and active against E.coli and closely related bacteria. This is Colicin-E6 from Escherichia coli.